Here is a 49-residue protein sequence, read N- to C-terminus: uncharacterized protein (49 aa).

The helical transmembrane segment at W16–F36 threads the bilayer.

The protein localises to the cell membrane. This is an uncharacterized protein from Bacillus subtilis (strain 168).